The chain runs to 359 residues: CMP-N-acetylneuraminate-poly-alpha-2,8-sialyltransferase (359 aa).

Residues 1 to 7 lie on the Cytoplasmic side of the membrane; it reads MRSIRKR. A helical; Signal-anchor for type II membrane protein membrane pass occupies residues 8 to 20; the sequence is WTICTISLLLIFY. At 21-359 the chain is on the lumenal side; that stretch reads KTKEMARTEE…KLTTGKCIKQ (339 aa). Residues N50, N74, and N119 are each glycosylated (N-linked (GlcNAc...) asparagine). Cystine bridges form between C142-C292 and C156-C356. Positions 147 and 170 each coordinate CMP-N-acetyl-beta-neuraminate. 2 N-linked (GlcNAc...) asparagine glycosylation sites follow: N204 and N219. Residues S279, T280, G281, and W301 each coordinate CMP-N-acetyl-beta-neuraminate. H331 acts as the Proton donor/acceptor in catalysis.

The protein belongs to the glycosyltransferase 29 family. In terms of processing, autopolysialylated.

It is found in the golgi apparatus membrane. The protein resides in the secreted. It carries out the reaction [N-acetyl-alpha-D-neuraminosyl-(2-&gt;8)](n) + CMP-N-acetyl-beta-neuraminate = [N-acetyl-alpha-D-neuraminosyl-(2-&gt;8)](n+1) + CMP + H(+). In terms of biological role, catalyzes the transfer of a sialic acid from a CMP-linked sialic acid donor onto a terminal alpha-2,3-, alpha-2,6-, or alpha-2,8-linked sialic acid of an N-linked glycan protein acceptor through alpha-2,8-linkages. Therefore, participates in polysialic acid synthesis on various sialylated N-acetyllactosaminyl oligosaccharides, including NCAM1 N-glycans, FETUB N-glycans and AHSG. It is noteworthy that alpha-2,3-linked sialic acid is apparently a better acceptor than alpha-2,6-linked sialic acid. The sequence is that of CMP-N-acetylneuraminate-poly-alpha-2,8-sialyltransferase (ST8SIA4) from Bos taurus (Bovine).